The sequence spans 420 residues: Dynein axonemal assembly factor 4 (420 aa).

The 85-residue stretch at 3 to 87 folds into the CS domain; that stretch reads VRVSEFSWQQ…KEPVLWDSLS (85 aa). A mediates interaction with ESR1 and STUB1 region spans residues 7–103; sequence EFSWQQTPAT…EMMQRIREKS (97 aa). The span at 164 to 192 shows a compositional bias: basic and acidic residues; the sequence is ECQKKADGQKRVQRKEKPLEGKQAEETKA. Residues 164–212 form a disordered region; the sequence is ECQKKADGQKRVQRKEKPLEGKQAEETKALKPRGLPRKAPPTRLPTRGR. TPR repeat units lie at residues 288–321, 322–355, and 364–397; these read PDWL…NCKI, PLLY…LTPP, and MKAH…DPAN.

Interacts with ZMYND10. Interacts with ESR1 and ESR2. Interacts with STUB1. Interacts with DNAAF2. Interacts with CCT3, CCT4, CCT5 and CCT8. Interacts with DNAAF6/PIH1D3.

It is found in the nucleus. It localises to the cytoplasm. The protein resides in the dynein axonemal particle. Its subcellular location is the cell projection. The protein localises to the neuron projection. Its function is as follows. Involved in neuronal migration during development of the cerebral neocortex. May regulate the stability and proteasomal degradation of the estrogen receptors that play an important role in neuronal differentiation, survival and plasticity. Axonemal dynein assembly factor required for ciliary motility. The protein is Dynein axonemal assembly factor 4 of Mus musculus (Mouse).